The primary structure comprises 547 residues: Probable FMN/FAD exporter YeeO (547 aa).

11 helical membrane passes run 94–114 (ITPL…MGVL), 139–159 (VIMA…AFSL), 174–194 (SLVI…HFGE), 211–231 (LALT…ITLI), 246–268 (LLIN…YGLF), 281–301 (GLTI…AIGF), 318–338 (FSII…SVLF), 350–370 (AGMG…AALI), 404–424 (VFWL…PFAG), 439–459 (VVVI…ASWV), and 486–506 (VVVG…VWMG).

The protein belongs to the multi antimicrobial extrusion (MATE) (TC 2.A.66.1) family.

It is found in the cell inner membrane. A transporter able to export peptides and flavins. When overexpressed allows cells deleted for multiple peptidases (pepA, pepB, pepD and pepN) to grow in the presence of dipeptides Ala-Gln or Gly-Tyr which otherwise inhibit growth. Cells overexpressing this protein have decreased intracellular levels of Ala-Gln dipeptide, and in a system that produces the Ala-Gln dipeptide, overproduction of this protein increases its export. When overexpressed increases secretion of FMN and FAD but not riboflavin; intracellular concentrations of FMN and riboflavin rise, possibly to compensate for increased secretion. Increased overexpression causes slight cell elongation. In Escherichia coli (strain K12), this protein is Probable FMN/FAD exporter YeeO (yeeO).